Consider the following 400-residue polypeptide: Hyaluronidase (400 aa).

Positions 1–19 (MQTILVLTTFLSAWFLAVG) are cleaved as a signal peptide. Disulfide bonds link C31–C319, C196–C209, C344–C355, C349–C384, and C386–C395. The active-site Proton donor is the E120. N-linked (GlcNAc...) asparagine glycosylation is found at N129 and N166. Residues N243 and N275 are each glycosylated (N-linked (GlcNAc...) asparagine). The EGF-like domain maps to 340–396 (NVARCSKQACSGRGRCTWPKDTSVIAWKFLVEKEDYDFYLGDIECKCVEGYEGRYCE).

The protein belongs to the glycosyl hydrolase 56 family. As to quaternary structure, monomer. Expressed by the venom gland.

It localises to the secreted. It carries out the reaction Random hydrolysis of (1-&gt;4)-linkages between N-acetyl-beta-D-glucosamine and D-glucuronate residues in hyaluronate.. In terms of biological role, spider venom endo-hyaluronidase that is able to degrade purified hyaluronic acid (HA) and chondroitin sulfate (CS). Has no activity on dermatan sulfate (DS) and heparan sulfate (HS). Also increases the dermonecrotic effect of the dermonecrotic toxin (AC P0CE80), when injected in rabbit skin, supporting the hypothesis that venom hyaluronidases are spreading factors. This Loxosceles intermedia (Brown spider) protein is Hyaluronidase.